The primary structure comprises 778 residues: Tastin (778 aa).

Basic and acidic residues predominate over residues 1–11 (MTTRQATKDPL). A disordered region spans residues 1-115 (MTTRQATKDP…PGPPAQTEAP (115 aa)). Serine 16, serine 98, and serine 170 each carry phosphoserine. Residues 212 to 244 (ISPSGPSFHPSTRPSFQELRRETAGSSRTSVSQ) form a disordered region. Residues 235–244 (AGSSRTSVSQ) show a composition bias toward polar residues. Residues serine 324, serine 334, serine 344, and serine 362 each carry the phosphoserine modification. A Phosphothreonine modification is found at threonine 363. Residue serine 376 is modified to Phosphoserine. 3 disordered regions span residues 406 to 425 (EGSGKPPVATPSGPHSNRTP), 508 to 587 (ECGE…AEPR), and 600 to 641 (PESS…RVEL). Residues 513–523 (QPCPPAEPGPP) are compositionally biased toward pro residues. 4 repeat units span residues 516 to 548 (PPAEPGPPEAFCRSEPEIPEPSLQEQLEVPEPY), 549 to 581 (PPAEPRPLESCCRSEPEIPESSRQEQLEVPEPC), 582 to 614 (PPAEPRPLESYCRIEPEIPESSRQEQLEVPEPC), and 615 to 647 (PPAEPGPLQPSTQGQSGPPGPCPRVELGASEPC). A 4 X 33 AA approximate tandem repeats region spans residues 516 to 647 (PPAEPGPPEA…RVELGASEPC (132 aa)). Residues 560–574 (CRSEPEIPESSRQEQ) show a composition bias toward basic and acidic residues. Residues 612 to 622 (EPCPPAEPGPL) are compositionally biased toward pro residues.

In terms of assembly, directly binds bystin, and indirectly trophinin. As to expression, strong expression at implantation sites. Was exclusively localized to the apical side of the syncytiotrophoblast. Also found in macrophages.

It is found in the cytoplasm. Functionally, could be involved with bystin and trophinin in a cell adhesion molecule complex that mediates an initial attachment of the blastocyst to uterine epithelial cells at the time of the embryo implantation. The polypeptide is Tastin (TROAP) (Homo sapiens (Human)).